A 416-amino-acid chain; its full sequence is DNA-guanine transglycosylase (416 aa).

Asp95 (proton acceptor) is an active-site residue. Catalysis depends on Asp256, which acts as the Nucleophile. Zn(2+) contacts are provided by Cys368, Cys370, Cys373, and His395.

Belongs to the DNA-guanine transglycosylase family. Zn(2+) is required as a cofactor.

Functionally, part of the dpd cluster involved in the insertion of 7-deazaguanine derivatives in DNA. DpdA may insert 7-cyano-7-deazaguanine (preQ0) into DNA with the help of DpdB. DpdA and dpdB are necessary and sufficient to synthesize 2'-deoxy-7-cyano-7-deazaguanosine (dPreQ0). This is DNA-guanine transglycosylase from Salmonella montevideo.